The chain runs to 478 residues: Putrescine oxidase (478 aa).

Residue 15-70 (RDVVVVGAGPAGLMAARTLVAAGRTVAVLEARDRVGGRTWSKTVDGAFLEIGGQWI) participates in FAD binding.

It belongs to the flavin monoamine oxidase family. FAD serves as cofactor.

The enzyme catalyses putrescine + O2 + H2O = 4-aminobutanal + H2O2 + NH4(+). The sequence is that of Putrescine oxidase (puo) from Kocuria rosea (Deinococcus erythromyxa).